We begin with the raw amino-acid sequence, 417 residues long: 4-hydroxy-3-methylbut-2-en-1-yl diphosphate synthase (flavodoxin) (417 aa).

Residues Cys-307, Cys-310, Cys-353, and Glu-360 each contribute to the [4Fe-4S] cluster site.

Belongs to the IspG family. It depends on [4Fe-4S] cluster as a cofactor.

It catalyses the reaction (2E)-4-hydroxy-3-methylbut-2-enyl diphosphate + oxidized [flavodoxin] + H2O + 2 H(+) = 2-C-methyl-D-erythritol 2,4-cyclic diphosphate + reduced [flavodoxin]. It functions in the pathway isoprenoid biosynthesis; isopentenyl diphosphate biosynthesis via DXP pathway; isopentenyl diphosphate from 1-deoxy-D-xylulose 5-phosphate: step 5/6. Functionally, converts 2C-methyl-D-erythritol 2,4-cyclodiphosphate (ME-2,4cPP) into 1-hydroxy-2-methyl-2-(E)-butenyl 4-diphosphate. The protein is 4-hydroxy-3-methylbut-2-en-1-yl diphosphate synthase (flavodoxin) of Xylella fastidiosa (strain 9a5c).